The following is a 374-amino-acid chain: 3-dehydroquinate synthase (374 aa).

Belongs to the archaeal-type DHQ synthase family.

It carries out the reaction 2-amino-2,3,7-trideoxy-D-lyxo-hept-6-ulosonate + NAD(+) + H2O = 3-dehydroquinate + NH4(+) + NADH + H(+). Catalyzes the oxidative deamination and cyclization of 2-amino-3,7-dideoxy-D-threo-hept-6-ulosonic acid (ADH) to yield 3-dehydroquinate (DHQ), which is fed into the canonical shikimic pathway of aromatic amino acid biosynthesis. The protein is 3-dehydroquinate synthase of Methanothermobacter thermautotrophicus (strain ATCC 29096 / DSM 1053 / JCM 10044 / NBRC 100330 / Delta H) (Methanobacterium thermoautotrophicum).